The sequence spans 143 residues: uncharacterized protein (143 aa).

A mitochondrion-targeting transit peptide spans 1–38; that stretch reads MKYWKYLSQLTIRRPLTYNNALLYRNRFPSILTWKRSA.

The protein resides in the mitochondrion. This is an uncharacterized protein from Schizosaccharomyces pombe (strain 972 / ATCC 24843) (Fission yeast).